Consider the following 1379-residue polypeptide: DNA-directed RNA polymerase subunit beta (1379 aa).

The protein belongs to the RNA polymerase beta chain family. As to quaternary structure, the RNAP catalytic core consists of 2 alpha, 1 beta, 1 beta' and 1 omega subunit. When a sigma factor is associated with the core the holoenzyme is formed, which can initiate transcription.

It catalyses the reaction RNA(n) + a ribonucleoside 5'-triphosphate = RNA(n+1) + diphosphate. Its function is as follows. DNA-dependent RNA polymerase catalyzes the transcription of DNA into RNA using the four ribonucleoside triphosphates as substrates. The protein is DNA-directed RNA polymerase subunit beta of Ruegeria sp. (strain TM1040) (Silicibacter sp.).